Here is a 947-residue protein sequence, read N- to C-terminus: Glutamate receptor 2.8 (947 aa).

A signal peptide spans 1 to 26 (MNPKKNNNTFLSYFVCLFLLLEVGLG). Residues 27–577 (QNQISEIKVG…NTWVFLKPWG (551 aa)) lie on the Extracellular side of the membrane. N-linked (GlcNAc...) asparagine glycosylation is found at Asn42, Asn118, Asn333, Asn341, Asn348, Asn420, Asn478, and Asn524. Residues 578–598 (LDLWVTTACFFVLIGFVVWLF) traverse the membrane as a helical segment. Topologically, residues 599–607 (EHRVNTDFR) are cytoplasmic. A helical transmembrane segment spans residues 608–628 (GPPHHQIGTSFWFSFSTMVFA). Topologically, residues 629–632 (HREK) are cytoplasmic. The chain crosses the membrane as a helical span at residues 633–653 (VVSNLARFVVVVWCFVVLVLT). At 654-819 (QSYTANLTSF…NRLSLRSFWG (166 aa)) the chain is on the extracellular side. N-linked (GlcNAc...) asparagine glycosylation is found at Asn659, Asn704, Asn723, and Asn779. A helical membrane pass occupies residues 820-840 (LFLIAGIASFLALLIFVFLFL). The Cytoplasmic segment spans residues 841-947 (YENRHTLCDD…ESDIECVVEQ (107 aa)).

The protein belongs to the glutamate-gated ion channel (TC 1.A.10.1) family. In terms of assembly, may form heteromers. Expressed predominantly in leaves.

Its subcellular location is the membrane. Glutamate-gated receptor that probably acts as a non-selective cation channel. May be involved in light-signal transduction and calcium homeostasis via the regulation of calcium influx into cells. The chain is Glutamate receptor 2.8 (GLR2.8) from Arabidopsis thaliana (Mouse-ear cress).